The primary structure comprises 388 residues: Pepsin A-5 (388 aa).

Residues 1–15 (MKWLLLLGLVALSEC) form the signal peptide. The propeptide at 16 to 62 (IMYKVPLIRKKSLRRTLSERGLLKDFLKKHNLNPARKYFPQWEAPTL) is activation peptide. A Peptidase A1 domain is found at 76–385 (YFGTIGIGTP…DRANNQVGLA (310 aa)). Asp-94 is an active-site residue. Cysteines 107 and 112 form a disulfide. Position 130 is a phosphoserine (Ser-130). Cys-268 and Cys-272 are joined by a disulfide. Asp-277 is a catalytic residue. Residues Cys-311 and Cys-344 are joined by a disulfide bond.

It belongs to the peptidase A1 family.

Its subcellular location is the secreted. It carries out the reaction Preferential cleavage: hydrophobic, preferably aromatic, residues in P1 and P1' positions. Cleaves 1-Phe-|-Val-2, 4-Gln-|-His-5, 13-Glu-|-Ala-14, 14-Ala-|-Leu-15, 15-Leu-|-Tyr-16, 16-Tyr-|-Leu-17, 23-Gly-|-Phe-24, 24-Phe-|-Phe-25 and 25-Phe-|-Tyr-26 bonds in the B chain of insulin.. In terms of biological role, shows particularly broad specificity; although bonds involving phenylalanine and leucine are preferred, many others are also cleaved to some extent. This is Pepsin A-5 (PGA5) from Homo sapiens (Human).